The sequence spans 934 residues: 2-oxoglutarate dehydrogenase E1 component (934 aa).

It belongs to the alpha-ketoglutarate dehydrogenase family. Homodimer. Part of the 2-oxoglutarate dehydrogenase (OGDH) complex composed of E1 (2-oxoglutarate dehydrogenase), E2 (dihydrolipoamide succinyltransferase) and E3 (dihydrolipoamide dehydrogenase); the complex contains multiple copies of the three enzymatic components (E1, E2 and E3). Thiamine diphosphate serves as cofactor.

It catalyses the reaction N(6)-[(R)-lipoyl]-L-lysyl-[protein] + 2-oxoglutarate + H(+) = N(6)-[(R)-S(8)-succinyldihydrolipoyl]-L-lysyl-[protein] + CO2. In terms of biological role, E1 component of the 2-oxoglutarate dehydrogenase (OGDH) complex which catalyzes the decarboxylation of 2-oxoglutarate, the first step in the conversion of 2-oxoglutarate to succinyl-CoA and CO(2). The sequence is that of 2-oxoglutarate dehydrogenase E1 component from Staphylococcus epidermidis (strain ATCC 35984 / DSM 28319 / BCRC 17069 / CCUG 31568 / BM 3577 / RP62A).